The following is a 147-amino-acid chain: DNA-directed RNA polymerase subunit 6 homolog (147 aa).

The protein belongs to the archaeal RpoK/eukaryotic RPB6 RNA polymerase subunit family. In terms of assembly, part of the viral DNA-directed RNA polymerase that consists of 8 polII-like subunits (RPB1, RPB2, RPB3, RPB5, RPB6, RPB7, RPB9, RPB10), a capping enzyme and a termination factor.

It localises to the host cytoplasm. It is found in the virion. In terms of biological role, component of the DNA-directed RNA polymerase (RNAP) that catalyzes the transcription in the cytoplasm of viral DNA into RNA using the four ribonucleoside triphosphates as substrates. This Ornithodoros (relapsing fever ticks) protein is DNA-directed RNA polymerase subunit 6 homolog.